A 488-amino-acid polypeptide reads, in one-letter code: Probable 26S proteasome non-ATPase regulatory subunit 3 (488 aa).

Residues 1-20 (MTQDVEMKEQAAPPSNSLSS) form a disordered region. One can recognise a PCI domain in the interval 240-421 (SRYLFYLGKI…GWMVSKETGD (182 aa)). Positions 452–488 (FPPNSHKEKESAEKRRERQQQEQELAKHIAEEDDDDF) are disordered. Residues 456–481 (SHKEKESAEKRRERQQQEQELAKHIA) are compositionally biased toward basic and acidic residues.

Belongs to the proteasome subunit S3 family. In terms of assembly, the 26S proteasome is composed of a core protease, known as the 20S proteasome, capped at one or both ends by the 19S regulatory complex (RC). The RC is composed of at least 18 different subunits in two subcomplexes, the base and the lid, which form the portions proximal and distal to the 20S proteolytic core, respectively.

It localises to the nucleus. Functionally, acts as a regulatory subunit of the 26 proteasome which is involved in the ATP-dependent degradation of ubiquitinated proteins. The polypeptide is Probable 26S proteasome non-ATPase regulatory subunit 3 (21D7) (Nicotiana tabacum (Common tobacco)).